The chain runs to 122 residues: Prefoldin subunit 1 (122 aa).

This sequence belongs to the prefoldin subunit beta family. In terms of assembly, heterohexamer of two PFD-alpha type and four PFD-beta type subunits.

Functionally, binds specifically to cytosolic chaperonin (c-CPN) and transfers target proteins to it. Binds to nascent polypeptide chain and promotes folding in an environment in which there are many competing pathways for nonnative proteins. This Danio rerio (Zebrafish) protein is Prefoldin subunit 1 (pfdn1).